Consider the following 477-residue polypeptide: Diacylglycerol O-acyltransferase 1-2 (477 aa).

A disordered region spans residues 1–48; the sequence is MAPPPSLAPDRGGGEPDDALRLRARAAAAAGDAPAPQQQQEQRHQEQQ. The span at 12 to 21 shows a compositional bias: basic and acidic residues; the sequence is GGGEPDDALR. A compositionally biased stretch (low complexity) spans 25-40; that stretch reads RAAAAAGDAPAPQQQQ. The next 7 helical transmembrane spans lie at 79–99, 123–143, 155–175, 182–202, 230–250, 263–283, and 319–339; these read HAGL…RLII, WPLL…LMVE, VVIL…VVVI, VLSG…LVSF, NIKW…TLCY, GWVV…GFII, and VWLC…AELL. The FYXDWWN motif motif lies at 346 to 352; sequence FYKDWWN. Helical transmembrane passes span 387 to 407, 409 to 429, and 442 to 462; these read GVAI…CVAV, CHIF…LVFL, and VGNM…CVLL. The active site involves histidine 401.

Belongs to the membrane-bound acyltransferase family. Sterol o-acyltransferase subfamily.

It localises to the endoplasmic reticulum membrane. It catalyses the reaction an acyl-CoA + a 1,2-diacyl-sn-glycerol = a triacyl-sn-glycerol + CoA. It functions in the pathway glycerolipid metabolism; triacylglycerol biosynthesis. Its function is as follows. Involved in triacylglycerol (TAG) synthesis. Catalyzes the acylation of the sn-3 hydroxy group of sn-1,2-diacylglycerol using acyl-CoA. The polypeptide is Diacylglycerol O-acyltransferase 1-2 (Oryza sativa subsp. japonica (Rice)).